The sequence spans 151 residues: ATP synthase subunit b' (151 aa).

The chain crosses the membrane as a helical span at residues 18-38 (TLPLMALQVVLLTFILNALFF).

Belongs to the ATPase B chain family. F-type ATPases have 2 components, F(1) - the catalytic core - and F(0) - the membrane proton channel. F(1) has five subunits: alpha(3), beta(3), gamma(1), delta(1), epsilon(1). F(0) has four main subunits: a(1), b(1), b'(1) and c(10-14). The alpha and beta chains form an alternating ring which encloses part of the gamma chain. F(1) is attached to F(0) by a central stalk formed by the gamma and epsilon chains, while a peripheral stalk is formed by the delta, b and b' chains.

It is found in the cellular thylakoid membrane. Functionally, f(1)F(0) ATP synthase produces ATP from ADP in the presence of a proton or sodium gradient. F-type ATPases consist of two structural domains, F(1) containing the extramembraneous catalytic core and F(0) containing the membrane proton channel, linked together by a central stalk and a peripheral stalk. During catalysis, ATP synthesis in the catalytic domain of F(1) is coupled via a rotary mechanism of the central stalk subunits to proton translocation. Component of the F(0) channel, it forms part of the peripheral stalk, linking F(1) to F(0). The b'-subunit is a diverged and duplicated form of b found in plants and photosynthetic bacteria. The sequence is that of ATP synthase subunit b' from Prochlorococcus marinus (strain MIT 9303).